The chain runs to 344 residues: Putative transport protein sll0060 (344 aa).

The next 8 membrane-spanning stretches (helical) occupy residues 14 to 34 (LWIG…LQIL), 41 to 61 (LRIF…VRWL), 72 to 92 (AVAL…LLVI), 155 to 175 (LINL…IFIM), 215 to 235 (IGQA…LSIF), 237 to 257 (VPLA…PFGG), 262 to 282 (VLIS…VLAI), and 310 to 330 (ILLS…LVAI).

This sequence belongs to the autoinducer-2 exporter (AI-2E) (TC 2.A.86) family.

The protein localises to the cell membrane. The protein is Putative transport protein sll0060 of Synechocystis sp. (strain ATCC 27184 / PCC 6803 / Kazusa).